Consider the following 2293-residue polypeptide: Protein Ycf2 A (2293 aa).

1647–1654 contributes to the ATP binding site; it reads GSIGTGRS.

It belongs to the Ycf2 family.

The protein localises to the plastid. Its subcellular location is the chloroplast stroma. In terms of biological role, probable ATPase of unknown function. Its presence in a non-photosynthetic plant (Epifagus virginiana) and experiments in tobacco indicate that it has an essential function which is probably not related to photosynthesis. This chain is Protein Ycf2 A, found in Crucihimalaya wallichii (Rock-cress).